Consider the following 30-residue polypeptide: Kalata-B16 (30 aa).

Residues 1-30 (GIPCAESCVYIPCTITALLGCKCQDKVCYD) constitute a cross-link (cyclopeptide (Gly-Asp)). 3 disulfide bridges follow: Cys4–Cys21, Cys8–Cys23, and Cys13–Cys28.

In terms of processing, this is a cyclic peptide.

Functionally, probably participates in a plant defense mechanism. This Oldenlandia affinis protein is Kalata-B16.